We begin with the raw amino-acid sequence, 189 residues long: Interferon alpha-13 (189 aa).

The signal sequence occupies residues 1–23 (MARPCAFLMVLVVLSYWSACSLG). Intrachain disulfides connect cysteine 24–cysteine 122 and cysteine 52–cysteine 162. Residues asparagine 94 and asparagine 101 are each glycosylated (N-linked (GlcNAc...) asparagine).

Belongs to the alpha/beta interferon family.

The protein resides in the secreted. Functionally, exhibits antiviral activity against Theiler's virus, Mengo virus and vesicular stomatitis virus. Interferons alpha stimulate the production of two enzymes: a protein kinase and an oligoadenylate synthetase. This Mus musculus (Mouse) protein is Interferon alpha-13 (Ifna13).